We begin with the raw amino-acid sequence, 102 residues long: MYAIVEIGGKQYKVEKDHFIYVYRLEGAEGSAVTFDNVLLLADNNQYQVGAPSVAGASVSGKILEHLKDDKVTAFKKKRRKGFRKTVGFRQSLTKVLITSLN.

The protein belongs to the bacterial ribosomal protein bL21 family. Part of the 50S ribosomal subunit. Contacts protein L20.

This protein binds to 23S rRNA in the presence of protein L20. The protein is Large ribosomal subunit protein bL21 of Cytophaga hutchinsonii (strain ATCC 33406 / DSM 1761 / CIP 103989 / NBRC 15051 / NCIMB 9469 / D465).